The following is a 479-amino-acid chain: Ribosomal RNA small subunit methyltransferase F (479 aa).

S-adenosyl-L-methionine-binding positions include 125–131 (AAAPGSK), Glu-149, Asp-176, and Asp-194. Cys-247 functions as the Nucleophile in the catalytic mechanism.

This sequence belongs to the class I-like SAM-binding methyltransferase superfamily. RsmB/NOP family.

The protein resides in the cytoplasm. It catalyses the reaction cytidine(1407) in 16S rRNA + S-adenosyl-L-methionine = 5-methylcytidine(1407) in 16S rRNA + S-adenosyl-L-homocysteine + H(+). Functionally, specifically methylates the cytosine at position 1407 (m5C1407) of 16S rRNA. The sequence is that of Ribosomal RNA small subunit methyltransferase F from Salmonella typhi.